Reading from the N-terminus, the 1171-residue chain is Pyruvate:ferredoxin oxidoreductase (1171 aa).

2 residues coordinate pyruvate: T29 and R112. CoA is bound by residues 424–428, K456, N556, and N598; that span reads SDGTV. 2 consecutive 4Fe-4S ferredoxin-type domains span residues 677–706 and 733–764; these read NIPQ…PYLA and FRIQ…MVPL. The [4Fe-4S] cluster site is built by C686, C689, C692, C696, C742, C745, C748, C752, C809, and C812. Thiamine diphosphate contacts are provided by residues E814, C837, 967–969, and 995–1000; these read DGW and TEVYSN. Residue C837 coordinates [4Fe-4S] cluster. D967, T995, and V997 together coordinate Mg(2+). N1000 contacts pyruvate. C1075 serves as a coordination point for [4Fe-4S] cluster.

This sequence belongs to the pyruvate:ferredoxin/flavodoxin oxidoreductase family. Homodimer. The cofactor is [4Fe-4S] cluster. Thiamine diphosphate is required as a cofactor. It depends on Mg(2+) as a cofactor.

The enzyme catalyses 2 oxidized [2Fe-2S]-[ferredoxin] + pyruvate + CoA = 2 reduced [2Fe-2S]-[ferredoxin] + acetyl-CoA + CO2 + H(+). Its function is as follows. Catalyzes the oxidative decarboxylation of pyruvate to acetyl-CoA and carbon dioxide. The two electrons that are generated as a result of pyruvate decarboxylation are used in the reduction of low potential ferredoxins, which provide reducing equivalents for central metabolism. Also catalyzes the reverse reaction, i.e. the synthesis of pyruvate from acetyl-CoA and carbon dioxide. Appears to function physiologically in both directions. The oxidation of pyruvate by PFOR is required to connect glycolysis and the Wood-Ljungdahl pathway of reductive acetogenesis. The conversion of acetyl-CoA to pyruvate links the Wood-Ljungdahl pathway of autotrophic CO2 fixation to the reductive tricarboxylic acid cycle. Can use methyl viologen as electron carrier in vitro. The chain is Pyruvate:ferredoxin oxidoreductase from Moorella thermoacetica (strain ATCC 39073 / JCM 9320).